Consider the following 523-residue polypeptide: Pentatricopeptide repeat-containing protein At1g52640, mitochondrial (523 aa).

The N-terminal 5 residues, 1–5 (MAIRT), are a transit peptide targeting the mitochondrion. PPR repeat units follow at residues 101–135 (SLES…NYFE), 137–171 (SSKV…GIKP), 172–206 (CVDD…GIVP), 207–241 (SAKT…NCVV), 242–276 (DLLA…GLKP), 277–311 (DAYS…DLVP), 312–346 (NVYT…GANP), 347–381 (DTWT…KCLP), 382–416 (DRHT…KFYP), and 417–452 (TVAT…GIPP). Positions 498-523 (KRRRLGRRSENSEDDDDDFELERDTI) are disordered. Acidic residues predominate over residues 509-523 (SEDDDDDFELERDTI).

The protein belongs to the PPR family. P subfamily.

It is found in the mitochondrion. The polypeptide is Pentatricopeptide repeat-containing protein At1g52640, mitochondrial (Arabidopsis thaliana (Mouse-ear cress)).